We begin with the raw amino-acid sequence, 156 residues long: 6,7-dimethyl-8-ribityllumazine synthase (156 aa).

5-amino-6-(D-ribitylamino)uracil contacts are provided by residues phenylalanine 22, 56–58 (AFE), and 80–82 (VVI). 85-86 (ST) serves as a coordination point for (2S)-2-hydroxy-3-oxobutyl phosphate. Histidine 88 (proton donor) is an active-site residue. Phenylalanine 113 lines the 5-amino-6-(D-ribitylamino)uracil pocket. Residue arginine 127 participates in (2S)-2-hydroxy-3-oxobutyl phosphate binding.

The protein belongs to the DMRL synthase family.

The enzyme catalyses (2S)-2-hydroxy-3-oxobutyl phosphate + 5-amino-6-(D-ribitylamino)uracil = 6,7-dimethyl-8-(1-D-ribityl)lumazine + phosphate + 2 H2O + H(+). It participates in cofactor biosynthesis; riboflavin biosynthesis; riboflavin from 2-hydroxy-3-oxobutyl phosphate and 5-amino-6-(D-ribitylamino)uracil: step 1/2. Catalyzes the formation of 6,7-dimethyl-8-ribityllumazine by condensation of 5-amino-6-(D-ribitylamino)uracil with 3,4-dihydroxy-2-butanone 4-phosphate. This is the penultimate step in the biosynthesis of riboflavin. The chain is 6,7-dimethyl-8-ribityllumazine synthase from Streptococcus agalactiae serotype Ia (strain ATCC 27591 / A909 / CDC SS700).